The primary structure comprises 127 residues: Modulator protein MzrA (127 aa).

The Cytoplasmic portion of the chain corresponds to M1–R10. A helical transmembrane segment spans residues L11–L31. Topologically, residues Q32–G127 are periplasmic.

Belongs to the MzrA family. In terms of assembly, interacts with EnvZ.

It is found in the cell inner membrane. In terms of biological role, modulates the activity of the EnvZ/OmpR two-component regulatory system, probably by directly modulating EnvZ enzymatic activity and increasing stability of phosphorylated OmpR. The polypeptide is Modulator protein MzrA (Enterobacter sp. (strain 638)).